We begin with the raw amino-acid sequence, 195 residues long: Peptidyl-tRNA hydrolase (195 aa).

A tRNA-binding site is contributed by tyrosine 17. The active-site Proton acceptor is histidine 22. 3 residues coordinate tRNA: tyrosine 68, asparagine 70, and asparagine 116.

The protein belongs to the PTH family. In terms of assembly, monomer.

It localises to the cytoplasm. The enzyme catalyses an N-acyl-L-alpha-aminoacyl-tRNA + H2O = an N-acyl-L-amino acid + a tRNA + H(+). Its function is as follows. Hydrolyzes ribosome-free peptidyl-tRNAs (with 1 or more amino acids incorporated), which drop off the ribosome during protein synthesis, or as a result of ribosome stalling. Functionally, catalyzes the release of premature peptidyl moieties from peptidyl-tRNA molecules trapped in stalled 50S ribosomal subunits, and thus maintains levels of free tRNAs and 50S ribosomes. The chain is Peptidyl-tRNA hydrolase from Shewanella frigidimarina (strain NCIMB 400).